Consider the following 498-residue polypeptide: UDP-N-acetylmuramoylalanine--D-glutamate ligase (498 aa).

An ATP-binding site is contributed by 119–125; it reads GTNGKST.

Belongs to the MurCDEF family.

The protein resides in the cytoplasm. The enzyme catalyses UDP-N-acetyl-alpha-D-muramoyl-L-alanine + D-glutamate + ATP = UDP-N-acetyl-alpha-D-muramoyl-L-alanyl-D-glutamate + ADP + phosphate + H(+). The protein operates within cell wall biogenesis; peptidoglycan biosynthesis. Functionally, cell wall formation. Catalyzes the addition of glutamate to the nucleotide precursor UDP-N-acetylmuramoyl-L-alanine (UMA). The chain is UDP-N-acetylmuramoylalanine--D-glutamate ligase from Wolbachia sp. subsp. Brugia malayi (strain TRS).